Here is a 152-residue protein sequence, read N- to C-terminus: Leukocyte-associated immunoglobulin-like receptor 2 (152 aa).

Positions 1-21 (MSPHLTALLGLVLCLAQTIHT) are cleaved as a signal peptide. The region spanning 29-117 (PSISAEPGTV…GWSEHSDFLE (89 aa)) is the Ig-like C2-type domain. A disulfide bridge connects residues C49 and C101. A disordered region spans residues 120–152 (VKESSGGPDSPDTEPGSSAGTVPGTEASGFDAP).

The protein localises to the secreted. The polypeptide is Leukocyte-associated immunoglobulin-like receptor 2 (LAIR2) (Homo sapiens (Human)).